We begin with the raw amino-acid sequence, 217 residues long: Translation initiation factor 6 (217 aa).

This sequence belongs to the eIF-6 family.

Its function is as follows. Binds to the 50S ribosomal subunit and prevents its association with the 30S ribosomal subunit to form the 70S initiation complex. This Methanococcoides burtonii (strain DSM 6242 / NBRC 107633 / OCM 468 / ACE-M) protein is Translation initiation factor 6.